The primary structure comprises 515 residues: Lysine--tRNA ligase (515 aa).

Mg(2+) contacts are provided by Glu425 and Glu432.

It belongs to the class-II aminoacyl-tRNA synthetase family. In terms of assembly, homodimer. The cofactor is Mg(2+).

The protein resides in the cytoplasm. The enzyme catalyses tRNA(Lys) + L-lysine + ATP = L-lysyl-tRNA(Lys) + AMP + diphosphate. This chain is Lysine--tRNA ligase, found in Cupriavidus metallidurans (strain ATCC 43123 / DSM 2839 / NBRC 102507 / CH34) (Ralstonia metallidurans).